The sequence spans 189 residues: dCTP deaminase (189 aa).

DCTP contacts are provided by residues 112 to 117 (KSTYAR), 136 to 138 (TLE), Gln-157, Tyr-171, and Gln-181. Residue Glu-138 is the Proton donor/acceptor of the active site.

Belongs to the dCTP deaminase family. Homotrimer.

It carries out the reaction dCTP + H2O + H(+) = dUTP + NH4(+). Its pathway is pyrimidine metabolism; dUMP biosynthesis; dUMP from dCTP (dUTP route): step 1/2. Functionally, catalyzes the deamination of dCTP to dUTP. This is dCTP deaminase from Methylacidiphilum infernorum (isolate V4) (Methylokorus infernorum (strain V4)).